The following is a 23-amino-acid chain: Cytochrome c oxidase subunit 7A1, mitochondrial (23 aa).

Belongs to the cytochrome c oxidase VIIa family. Component of the complex IV (CIV, cytochrome c oxidase), a multisubunit enzyme composed of 14 subunits. The complex is composed of a catalytic core of 3 subunits MT-CO1, MT-CO2 and MT-CO3, encoded in the mitochondrial DNA, and 11 supernumerary subunits COX4I1 (or COX4I2), COX5A, COX5B, COX6A2 (or COX6A1), COX6B1 (or COX6B2), COX6C, COX7A1 (or COX7A2), COX7B, COX7C, COX8B and NDUFA4, which are encoded in the nuclear genome. The complex exists as a monomer or a dimer and forms supercomplexes (SCs) in the inner mitochondrial membrane with NADH-ubiquinone oxidoreductase (complex I, CI) and ubiquinol-cytochrome c oxidoreductase (cytochrome b-c1 complex, complex III, CIII), resulting in different assemblies (supercomplex SCI(1)III(2)IV(1) and megacomplex MCI(2)III(2)IV(2)).

Its subcellular location is the mitochondrion inner membrane. The protein operates within energy metabolism; oxidative phosphorylation. Functionally, component of the mitochondrial respiratory complex IV (CIV, also named cytochrome c oxidase complex), the last enzyme in the mitochondrial electron transport chain which drives oxidative phosphorylation. The CIV complex is the component of the respiratory chain that catalyzes the reduction of oxygen to water. Acts as an assembly factor that specifically drives the homodimerization of CIV complexes, mediating the formation of mitochondrial respiratory supercomplexes (respirasomes) containing two CIV: supercomplxes with two molecules of CIV show improved activity. Despite being highly expressed in brown adipose tissue, not required for thermogenesis. The protein is Cytochrome c oxidase subunit 7A1, mitochondrial (COX7A1) of Canis lupus familiaris (Dog).